The primary structure comprises 105 residues: Small ribosomal subunit protein uS10 (105 aa).

The protein belongs to the universal ribosomal protein uS10 family. In terms of assembly, part of the 30S ribosomal subunit.

Functionally, involved in the binding of tRNA to the ribosomes. This is Small ribosomal subunit protein uS10 from Rickettsia typhi (strain ATCC VR-144 / Wilmington).